We begin with the raw amino-acid sequence, 752 residues long: Sialidase 85-1.1 (752 aa).

The N-terminal stretch at 1-23 is a signal peptide; sequence MSRRVFASAVLLLIVVTMCCGGA. 2 BNR repeats span residues 274 to 285 and 319 to 330; these read IYSKDNGSTWSL and YVSRDMGTTWTE. The segment at 693-725 is disordered; the sequence is APEPQVKIAPKPAAPAAPAGNEETARETGDGGA. Residues 701 to 711 are compositionally biased toward low complexity; the sequence is APKPAAPAAPA.

This sequence belongs to the glycosyl hydrolase 33 family.

The enzyme catalyses Hydrolysis of alpha-(2-&gt;3)-, alpha-(2-&gt;6)-, alpha-(2-&gt;8)- glycosidic linkages of terminal sialic acid residues in oligosaccharides, glycoproteins, glycolipids, colominic acid and synthetic substrates.. Developmentally regulated neuraminidase implicated in parasite invasion of cells. May contribute to the pathology during T.cruzi infection by cleaving sialic acid from cells of the immune system. The chain is Sialidase 85-1.1 (SA85-1.1) from Trypanosoma cruzi.